A 772-amino-acid polypeptide reads, in one-letter code: Rho guanine nucleotide exchange factor 6 (772 aa).

The Calponin-homology (CH) domain occupies Met1–Glu111. A disordered region spans residues Ser115 to Asn158. Over residues Ser122–Thr133 the composition is skewed to low complexity. Ser126 carries the post-translational modification Phosphoserine. A Phosphothreonine modification is found at Thr133. Residues Asn134–Gln146 are compositionally biased toward polar residues. One can recognise an SH3 domain in the interval Ser160–Pro219. Ser225 carries the post-translational modification Phosphoserine. The DH domain occupies Tyr241–Leu421. The region spanning Asp443 to Lys548 is the PH domain. Ser488 is modified (phosphoserine). The span at Ser557–Thr573 shows a compositional bias: low complexity. A disordered region spans residues Ser557–Glu581. Ser640 and Ser680 each carry phosphoserine.

As to quaternary structure, interacts with PAK kinases through the SH3 domain. Interacts with GIT1. Interacts with PARVB. Component of cytoplasmic complexes, which also contain PXN, GIT1 and PAK1. Interacts with BIN2. Identified in a complex with BIN2 and GIT2. Interacts with PARVG; the guanine nucleotide exchange factor activity of ARHGEF6 is essential for PARVG-induced enhancement of cell spreading.

The protein localises to the cell projection. Its subcellular location is the lamellipodium. Acts as a RAC1 guanine nucleotide exchange factor (GEF). This chain is Rho guanine nucleotide exchange factor 6 (Arhgef6), found in Rattus norvegicus (Rat).